Here is a 133-residue protein sequence, read N- to C-terminus: Fluoride-specific ion channel FluC 3 (133 aa).

The next 3 membrane-spanning stretches (helical) occupy residues 7-27 (ILVLVGGFIGGVMRFFLSGYV), 37-57 (WGTFVVNVSGAFVIGTAAGLG), and 60-80 (LGAIFSTTIFHEFIMVGLLGG). Na(+) is bound by residues G79 and T82. A helical membrane pass occupies residues 107-127 (IVASALLCVLAVAAGYGGIMW).

This sequence belongs to the fluoride channel Fluc/FEX (TC 1.A.43) family.

It localises to the cell inner membrane. It catalyses the reaction fluoride(in) = fluoride(out). Its activity is regulated as follows. Na(+) is not transported, but it plays an essential structural role and its presence is essential for fluoride channel function. Fluoride-specific ion channel. Important for reducing fluoride concentration in the cell, thus reducing its toxicity. The polypeptide is Fluoride-specific ion channel FluC 3 (Brucella suis biovar 1 (strain 1330)).